A 391-amino-acid polypeptide reads, in one-letter code: Paired box protein Pax-5 (391 aa).

A disordered region spans residues 1-21 (MDLEKNYPTPRTSRTGHGGVN). The segment at residues 16–142 (GHGGVNQLGG…SSINRIIRTK (127 aa)) is a DNA-binding region (paired). Residues 19–75 (GVNQLGGVFVNGRPLPDVVRQRIVELAHQGVRPCDISRQLRVSHGCVSKILGRYYET) are PAI subdomain. The segment at 94 to 142 (KVVEKIAEYKRQNPTMFAWEIRDRLLAERVCDNDTVPSVSSINRIIRTK) is RED subdomain. A disordered region spans residues 182–218 (SGILGITSPSADTNKRKRDEGIQESPVPNGHSLPGRD).

Interacts with ETS1; this interaction alters PAX5 DNA-binding properties. Binds DNA as a monomer. Interacts with TBP; this interaction allows PAX5 to interact with the basal transcription machinery. Interacts with RB1. Interacts with TLE4. Interacts with DAXX. In terms of assembly, (Microbial infection) Interacts (via N-terminus) with Epstein-Barr virus protein BZLF1 (via C-terminus); this interaction inhibits BZLF1-mediated lytic viral reactivation. Interacts also with EBNA1; this interaction promotes EBNA1-dependent transcription. O-glycosylated. In terms of processing, phosphorylated by SYK. This phosphorylation plays an important role in the abolition of BLIMP1 repression by PAX5 in order to trigger plasma cell differentiation.

The protein resides in the nucleus. Its function is as follows. Transcription factor that plays an essential role in commitment of lymphoid progenitors to the B-lymphocyte lineage. Fulfills a dual role by repressing B-lineage inappropriate genes and simultaneously activating B-lineage-specific genes. In turn, regulates cell adhesion and migration, induces V(H)-to-D(H)J(H) recombination, facilitates pre-B-cell receptor signaling and promotes development to the mature B-cell stage. Repression of the cohesin-release factor WAPL causes global changes of the chromosomal architecture in pro-B cells to facilitate the generation of a diverse antibody repertoire. (Microbial infection) Plays an essential role in the maintenance of Epstein-Barr virus genome copy number within the host cell by promoting EBNA1/oriP-dependent binding and transcription. Also participates in the inhibition of lytic EBV reactivation by modulating viral BZLF1 activity. This is Paired box protein Pax-5 (PAX5) from Homo sapiens (Human).